Reading from the N-terminus, the 198-residue chain is Molybdenum cofactor guanylyltransferase (198 aa).

GTP is bound by residues 14 to 16 (LAG), Lys27, Asp73, and Asp103. Asp103 lines the Mg(2+) pocket.

This sequence belongs to the MobA family. As to quaternary structure, monomer. The cofactor is Mg(2+).

The protein localises to the cytoplasm. The enzyme catalyses Mo-molybdopterin + GTP + H(+) = Mo-molybdopterin guanine dinucleotide + diphosphate. Transfers a GMP moiety from GTP to Mo-molybdopterin (Mo-MPT) cofactor (Moco or molybdenum cofactor) to form Mo-molybdopterin guanine dinucleotide (Mo-MGD) cofactor. The protein is Molybdenum cofactor guanylyltransferase of Pseudomonas aeruginosa (strain LESB58).